Reading from the N-terminus, the 1073-residue chain is MRVFLLCAYILLLMVSQLRAVSFPEDDEPLNTVDYHYSRQYPVFRGRPSGNESQHRLDFQLMLKIRDTLYIAGRDQVYTVNLNEMPKTEVIPNKKLTWRSRQQDRENCAMKGKHKDECHNFIKVFVPRNDEMVFVCGTNAFNPMCRYYRLSTLEYDGEEISGLARCPFDARQTNVALFADGKLYSATVADFLASDAVIYRSMGDGSALRTIKYDSKWIKEPHFLHAIEYGNYVYFFFREIAVEHNNLGKAVYSRVARICKNDMGGSQRVLEKHWTSFLKARLNCSVPGDSFFYFDVLQSITDIIQINGIPTVVGVFTTQLNSIPGSAVCAFSMDDIEKVFKGRFKEQKTPDSVWTAVPEDKVPKPRPGCCAKHGLAEAYKTSIDFPDETLSFIKSHPLMDSAVPPIADEPWFTKTRVRYRLTAISVDHSAGPYQNYTVIFVGSEAGMVLKVLAKTSPFSLNDSVLLEEIEAYNHAKCSAENEEDKKVISLQLDKDHHALYVAFSSCIIRIPLSRCERYGSCKKSCIASRDPYCGWLSQGSCGRVTPGMLAEGYEQDTEFGNTAHLGDCHEILPTSTTPDYKIFGGPTSDMEVSSSSVTTMASIPEITPKVIDTWRPKLTSSRKFVVQDDPNTSDFTDPLSGIPKGVRWEVQSGESNQMVHMNVLITCVFAAFVLGAFIAGVAVYCYRDMFVRKNRKIHKDAESAQSCTDSSGSFAKLNGLFDSPVKEYQQNIDSPKLYSNLLTSRKELPPNGDTKSMVMDHRGQPPELAALPTPESTPVLHQKTLQAMKSHSEKAHGHGASRKETPQFFPSSPPPHSPLSHGHIPSAIVLPNATHDYNTSFSNSNAHKAEKKLQNIDHPLTKSSSKRDHRRSVDSRNTLNDLLKHLNDPNSNPKAIMGDIQMAHQNLMLDPMGSMSEVPPKVPNREASLYSPPSTLPRNSPTKRVDVPTTPGVPMTSLERQRGYHKNSSQRHSISAMPKNLNSPNGVLLSRQPSMNRGGYMPTPTGAKVDYIQGTPVSVHLQPSLSRQSSYTSNGTLPRTGLKRTPSLKPDVPPKPSFVPQTPSVRPLNKYTY.

The first 20 residues, 1–20 (MRVFLLCAYILLLMVSQLRA), serve as a signal peptide directing secretion. Topologically, residues 21 to 662 (VSFPEDDEPL…GESNQMVHMN (642 aa)) are extracellular. In terms of domain architecture, Sema spans 27–512 (DEPLNTVDYH…FSSCIIRIPL (486 aa)). Asn51 carries N-linked (GlcNAc...) asparagine glycosylation. Cystine bridges form between Cys108–Cys118, Cys136–Cys145, Cys259–Cys370, and Cys284–Cys329. Asn283 carries an N-linked (GlcNAc...) asparagine glycan. 2 N-linked (GlcNAc...) asparagine glycosylation sites follow: Asn435 and Asn461. 4 cysteine pairs are disulfide-bonded: Cys477-Cys506, Cys515-Cys533, Cys521-Cys568, and Cys525-Cys541. Residues 514–569 (RCERYGSCKKSCIASRDPYCGWLSQGSCGRVTPGMLAEGYEQDTEFGNTAHLGDCH) enclose the PSI domain. Asn631 is a glycosylation site (N-linked (GlcNAc...) asparagine). The chain crosses the membrane as a helical span at residues 663–683 (VLITCVFAAFVLGAFIAGVAV). Residues 684–1073 (YCYRDMFVRK…SVRPLNKYTY (390 aa)) are Cytoplasmic-facing. Phosphoserine is present on residues Ser723, Ser734, and Ser744. Disordered regions lie at residues 744-775 (SRKE…PTPE), 787-825 (AMKS…GHIP), 839-874 (TSFS…RSVD), 914-1005 (SMSE…PTPT), and 1021-1073 (LQPS…KYTY). Residue Thr773 is modified to Phosphothreonine. Basic and acidic residues predominate over residues 790-805 (SHSEKAHGHGASRKET). Phosphoserine is present on residues Ser931, Ser957, and Ser983. Residues 931–942 (SPPSTLPRNSPT) are compositionally biased toward polar residues. 2 stretches are compositionally biased toward polar residues: residues 980–995 (NLNS…QPSM) and 1021–1037 (LQPS…NGTL).

The protein belongs to the semaphorin family.

The protein localises to the cell membrane. The protein resides in the cytoplasm. Its function is as follows. Shows growth cone collapsing activity on dorsal root ganglion (DRG) neurons in vitro. May be a stop signal for the DRG neurons in their target areas, and possibly also for other neurons. May also be involved in the maintenance and remodeling of neuronal connections. Ligand of TREM2 with PLXNA1 as coreceptor in dendritic cells, plays a role in the generation of immune responses and skeletal homeostasis. The polypeptide is Semaphorin-6D (Homo sapiens (Human)).